A 69-amino-acid chain; its full sequence is MNSANPCCDPITCKPRRGEHCVSGPCCRNCKFLNPGTICKRTMLDGLNDYCTGVTSDCPRNPWKSEEED.

A Disintegrin domain is found at 1–66 (MNSANPCCDP…DCPRNPWKSE (66 aa)). 4 cysteine pairs are disulfide-bonded: C7/C30, C21/C27, C26/C51, and C39/C58. Residues 43–45 (MLD) carry the Cell attachment site; atypical (MLD) motif.

This sequence belongs to the disintegrin family. Dimeric disintegrin subfamily. Heterodimer with VLO5A; disulfide-linked. Expressed by the venom gland.

The protein localises to the secreted. Poor inhibitor of platelet aggregation. The disintegrin inhibits the adhesion of the alpha-4/beta-1 (ITGA4/ITGB1) integrin to VCAM-1. Inhibition on alpha-2b/beta-3 (ITGA2B/ITGB3) is low. This Macrovipera lebetina obtusa (Levant blunt-nosed viper) protein is Disintegrin VLO5B.